A 291-amino-acid polypeptide reads, in one-letter code: Ribosomal RNA small subunit methyltransferase A (291 aa).

S-adenosyl-L-methionine is bound by residues Asn33, Val35, Gly60, Glu81, Asp111, and Asn129.

It belongs to the class I-like SAM-binding methyltransferase superfamily. rRNA adenine N(6)-methyltransferase family. RsmA subfamily.

It is found in the cytoplasm. The catalysed reaction is adenosine(1518)/adenosine(1519) in 16S rRNA + 4 S-adenosyl-L-methionine = N(6)-dimethyladenosine(1518)/N(6)-dimethyladenosine(1519) in 16S rRNA + 4 S-adenosyl-L-homocysteine + 4 H(+). Specifically dimethylates two adjacent adenosines (A1518 and A1519) in the loop of a conserved hairpin near the 3'-end of 16S rRNA in the 30S particle. May play a critical role in biogenesis of 30S subunits. The sequence is that of Ribosomal RNA small subunit methyltransferase A from Streptomyces griseus subsp. griseus (strain JCM 4626 / CBS 651.72 / NBRC 13350 / KCC S-0626 / ISP 5235).